The primary structure comprises 128 residues: L-ectoine synthase (128 aa).

This sequence belongs to the ectoine synthase family.

It carries out the reaction (2S)-4-acetamido-2-aminobutanoate = L-ectoine + H2O. Its pathway is amine and polyamine biosynthesis; ectoine biosynthesis; L-ectoine from L-aspartate 4-semialdehyde: step 3/3. Its function is as follows. Catalyzes the circularization of gamma-N-acetyl-alpha,gamma-diaminobutyric acid (ADABA) to ectoine (1,4,5,6-tetrahydro-2-methyl-4-pyrimidine carboxylic acid), which is an excellent osmoprotectant. This Virgibacillus pantothenticus protein is L-ectoine synthase.